We begin with the raw amino-acid sequence, 147 residues long: PTPN13-like protein, Y-linked (147 aa).

As to expression, expressed in testis. Detected in spermatocytes, spermatids and spermatozoa (at protein level).

The polypeptide is PTPN13-like protein, Y-linked (PRY) (Homo sapiens (Human)).